Reading from the N-terminus, the 513-residue chain is Bifunctional purine biosynthesis protein PurH (513 aa).

Positions 1-145 (MNKRAIISVY…KNFKYTTVIV (145 aa)) constitute an MGS-like domain.

The protein belongs to the PurH family.

The enzyme catalyses (6R)-10-formyltetrahydrofolate + 5-amino-1-(5-phospho-beta-D-ribosyl)imidazole-4-carboxamide = 5-formamido-1-(5-phospho-D-ribosyl)imidazole-4-carboxamide + (6S)-5,6,7,8-tetrahydrofolate. It catalyses the reaction IMP + H2O = 5-formamido-1-(5-phospho-D-ribosyl)imidazole-4-carboxamide. Its pathway is purine metabolism; IMP biosynthesis via de novo pathway; 5-formamido-1-(5-phospho-D-ribosyl)imidazole-4-carboxamide from 5-amino-1-(5-phospho-D-ribosyl)imidazole-4-carboxamide (10-formyl THF route): step 1/1. It functions in the pathway purine metabolism; IMP biosynthesis via de novo pathway; IMP from 5-formamido-1-(5-phospho-D-ribosyl)imidazole-4-carboxamide: step 1/1. The sequence is that of Bifunctional purine biosynthesis protein PurH from Caldicellulosiruptor bescii (strain ATCC BAA-1888 / DSM 6725 / KCTC 15123 / Z-1320) (Anaerocellum thermophilum).